The sequence spans 129 residues: UPF0344 protein SAB0838 (129 aa).

Helical transmembrane passes span 1-21 (MLHL…ATYL), 36-56 (LHMV…WILI), 67-87 (MLLT…EVSI), and 99-119 (MFWI…ILPL).

The protein belongs to the UPF0344 family.

It localises to the cell membrane. The chain is UPF0344 protein SAB0838 from Staphylococcus aureus (strain bovine RF122 / ET3-1).